Reading from the N-terminus, the 745-residue chain is Elongation factor G, mitochondrial (745 aa).

A tr-type G domain is found at 40–317 (EKIRNIGISA…AVLDYLPNPG (278 aa)). GTP is bound by residues 49–56 (AHIDSGKT), 116–120 (DTPGH), and 170–173 (NKLD).

Belongs to the TRAFAC class translation factor GTPase superfamily. Classic translation factor GTPase family. EF-G/EF-2 subfamily.

The protein localises to the mitochondrion. Its pathway is protein biosynthesis; polypeptide chain elongation. Functionally, mitochondrial GTPase that catalyzes the GTP-dependent ribosomal translocation step during translation elongation. During this step, the ribosome changes from the pre-translocational (PRE) to the post-translocational (POST) state as the newly formed A-site-bound peptidyl-tRNA and P-site-bound deacylated tRNA move to the P and E sites, respectively. Catalyzes the coordinated movement of the two tRNA molecules, the mRNA and conformational changes in the ribosome. Essential during development as it acts as a retrograde signal from mitochondria to the nucleus to slow down cell proliferation if mitochondrial energy output is low. This is Elongation factor G, mitochondrial from Drosophila willistoni (Fruit fly).